A 662-amino-acid chain; its full sequence is 72 kDa type IV collagenase (662 aa).

An N-terminal signal peptide occupies residues 1–29; sequence MEARLVWGVLVGPLRVLCVLCCLLGHAIA. The propeptide at 30-109 is activation peptide; it reads APSPIIKFPG…PRCGNPDVAN (80 aa). The Cysteine switch signature appears at 100-107; it reads PRCGNPDV. A Zn(2+)-binding site is contributed by Cys102. The tract at residues 110-221 is collagenase-like 1; the sequence is YNFFPRKPKW…LWTLGEGQVV (112 aa). Ca(2+) contacts are provided by Asp134 and Asp168. Residues His178 and Asp180 each coordinate Zn(2+). Ca(2+) is bound by residues Asp185 and Gly186. His193 serves as a coordination point for Zn(2+). Ca(2+)-binding residues include Gly200, Gly202, and Asp204. Zn(2+) is bound at residue His206. Residues Asp208, Asp209, and Glu211 each contribute to the Ca(2+) site. A collagen-binding region spans residues 222–396; that stretch reads RVKYGNADGE…WGFCPDQGYS (175 aa). 3 consecutive Fibronectin type-II domains span residues 228–276, 286–334, and 344–392; these read ADGE…FCPH, GDGQ…FCPE, and SEGA…FCPD. 6 disulfide bridges follow: Cys233-Cys259, Cys247-Cys274, Cys291-Cys317, Cys305-Cys332, Cys349-Cys375, and Cys363-Cys390. A collagenase-like 2 region spans residues 397–467; it reads LFLVAAHEFG…GPTPTLGPVT (71 aa). His403 serves as a coordination point for Zn(2+). The active site involves Glu404. Zn(2+)-binding residues include His407 and His413. Residues 414-662 are required for inhibitor TIMP2 binding; that stretch reads SQDPGALMAP…GSIKSDWLGC (249 aa). A disulfide bridge links Cys471 with Cys662. Hemopexin repeat units follow at residues 474-518, 519-565, 567-615, and 616-662; these read DIVF…WPEL, PEKI…GLPP, VQQV…WNAI, and PDNL…WLGC. Residues Asp478, Asp523, and Asp571 each contribute to the Ca(2+) site. Residue Asn575 is glycosylated (N-linked (GlcNAc...) asparagine). Asp620 lines the Ca(2+) pocket. Asn644 carries an N-linked (GlcNAc...) asparagine glycan.

Belongs to the peptidase M10A family. Interacts (via the C-terminal hemopexin-like domains-containing region) with the integrin alpha-V/beta-3; the interaction promotes vascular invasion in angiogenic vessels and melamoma cells. Interacts (via the C-terminal PEX domain) with TIMP2 (via the C-terminal); the interaction inhibits the degradation activity. Interacts with GSK3B. It depends on Ca(2+) as a cofactor. The cofactor is Zn(2+). Phosphorylation on multiple sites modulates enzymatic activity. Phosphorylated by PKC in vitro. In terms of processing, the propeptide is processed by MMP14 (MT-MMP1) and MMP16 (MT-MMP3). Autocatalytic cleavage in the C-terminal produces the anti-angiogenic peptide, PEX. This processing appears to be facilitated by binding integrin integrinv/beta3.

Its subcellular location is the secreted. It is found in the extracellular space. The protein resides in the extracellular matrix. The protein localises to the membrane. It localises to the nucleus. It carries out the reaction Cleavage of gelatin type I and collagen types IV, V, VII, X. Cleaves the collagen-like sequence Pro-Gln-Gly-|-Ile-Ala-Gly-Gln.. Functionally, ubiquitinous metalloproteinase that is involved in diverse functions such as remodeling of the vasculature, angiogenesis, tissue repair, tumor invasion, inflammation, and atherosclerotic plaque rupture. As well as degrading extracellular matrix proteins, can also act on several nonmatrix proteins such as big endothelial 1 and beta-type CGRP promoting vasoconstriction. Also cleaves KISS at a Gly-|-Leu bond. Appears to have a role in myocardial cell death pathways. Contributes to myocardial oxidative stress by regulating the activity of GSK3beta. Cleaves GSK3beta in vitro. Involved in the formation of the fibrovascular tissues. Its function is as follows. PEX, the C-terminal non-catalytic fragment of MMP2, possesses anti-angiogenic and anti-tumor properties and inhibits cell migration and cell adhesion to FGF2 and vitronectin. Ligand for integrin alpha-v/beta3 on the surface of blood vessels. This Rattus norvegicus (Rat) protein is 72 kDa type IV collagenase (Mmp2).